Reading from the N-terminus, the 104-residue chain is Putative Fis-like DNA-binding protein (104 aa).

The segment at residues 80–99 is a DNA-binding region (H-T-H motif); that stretch reads QTKASELLGLNRGTLRKKLK.

This sequence belongs to the transcriptional regulatory Fis family.

The polypeptide is Putative Fis-like DNA-binding protein (Pseudomonas aeruginosa (strain ATCC 15692 / DSM 22644 / CIP 104116 / JCM 14847 / LMG 12228 / 1C / PRS 101 / PAO1)).